We begin with the raw amino-acid sequence, 94 residues long: Pyrimidine/purine nucleoside phosphorylase (94 aa).

The protein belongs to the nucleoside phosphorylase PpnP family.

The enzyme catalyses a purine D-ribonucleoside + phosphate = a purine nucleobase + alpha-D-ribose 1-phosphate. It catalyses the reaction adenosine + phosphate = alpha-D-ribose 1-phosphate + adenine. It carries out the reaction cytidine + phosphate = cytosine + alpha-D-ribose 1-phosphate. The catalysed reaction is guanosine + phosphate = alpha-D-ribose 1-phosphate + guanine. The enzyme catalyses inosine + phosphate = alpha-D-ribose 1-phosphate + hypoxanthine. It catalyses the reaction thymidine + phosphate = 2-deoxy-alpha-D-ribose 1-phosphate + thymine. It carries out the reaction uridine + phosphate = alpha-D-ribose 1-phosphate + uracil. The catalysed reaction is xanthosine + phosphate = alpha-D-ribose 1-phosphate + xanthine. Catalyzes the phosphorolysis of diverse nucleosides, yielding D-ribose 1-phosphate and the respective free bases. Can use uridine, adenosine, guanosine, cytidine, thymidine, inosine and xanthosine as substrates. Also catalyzes the reverse reactions. This is Pyrimidine/purine nucleoside phosphorylase from Pseudomonas putida (strain ATCC 700007 / DSM 6899 / JCM 31910 / BCRC 17059 / LMG 24140 / F1).